The primary structure comprises 186 residues: Ribosome-recycling factor (186 aa).

It belongs to the RRF family.

It is found in the cytoplasm. Its function is as follows. Responsible for the release of ribosomes from messenger RNA at the termination of protein biosynthesis. May increase the efficiency of translation by recycling ribosomes from one round of translation to another. This Limosilactobacillus reuteri (Lactobacillus reuteri) protein is Ribosome-recycling factor.